A 434-amino-acid polypeptide reads, in one-letter code: Enolase (434 aa).

Q166 is a binding site for (2R)-2-phosphoglycerate. E208 (proton donor) is an active-site residue. Mg(2+) is bound by residues D245, E290, and D317. (2R)-2-phosphoglycerate contacts are provided by K342, R371, S372, and K393. The active-site Proton acceptor is K342.

Belongs to the enolase family. It depends on Mg(2+) as a cofactor.

Its subcellular location is the cytoplasm. The protein resides in the secreted. The protein localises to the cell surface. The enzyme catalyses (2R)-2-phosphoglycerate = phosphoenolpyruvate + H2O. The protein operates within carbohydrate degradation; glycolysis; pyruvate from D-glyceraldehyde 3-phosphate: step 4/5. Catalyzes the reversible conversion of 2-phosphoglycerate (2-PG) into phosphoenolpyruvate (PEP). It is essential for the degradation of carbohydrates via glycolysis. In Caldicellulosiruptor saccharolyticus (strain ATCC 43494 / DSM 8903 / Tp8T 6331), this protein is Enolase.